The primary structure comprises 57 residues: Large ribosomal subunit protein bL32 (57 aa).

Belongs to the bacterial ribosomal protein bL32 family.

In Staphylococcus haemolyticus (strain JCSC1435), this protein is Large ribosomal subunit protein bL32.